Here is a 639-residue protein sequence, read N- to C-terminus: Far upstream element-binding protein 1 (639 aa).

Disordered stretches follow at residues 1-27 and 40-88; these read MADYSTVPPPSSGSAGGGGGGGVNDAF and KIGG…LPPM. An N-acetylalanine modification is found at Ala-2. The span at 14–23 shows a compositional bias: gly residues; sequence SAGGGGGGGV. A phosphoserine mark is found at Ser-48 and Ser-51. The span at 61–73 shows a compositional bias: basic and acidic residues; that stretch reads RPLEDGDQPDAKK. KH domains are found at residues 95 to 159, 180 to 246, and 270 to 334; these read VMTE…KRLL, NAVQ…KEMV, and NEGI…AEII. The residue at position 135 (Ser-135) is a Phosphoserine. Position 148 is a phosphothreonine (Thr-148). Omega-N-methylarginine occurs at positions 316, 354, 356, and 358. Positions 341 to 360 are disordered; sequence VQAGNPGGPGPGGRGRGRGQ. The span at 345–360 shows a compositional bias: gly residues; that stretch reads NPGGPGPGGRGRGRGQ. The KH 4 domain maps to 371 to 438; sequence LQEFNFIVPT…QQIDYARQLI (68 aa). Thr-427 is modified (phosphothreonine). Disordered regions lie at residues 442–527 and 543–574; these read IGGP…GTDP and QAQPPPAAPAGAPTTTQTNGQGDQQNPAPAGQ. Residues 463-500 show a composition bias toward pro residues; that stretch reads PHGPPGPPGPGTPMGPYNPAPYNPGPPGPAPHGPPAPY. Low complexity predominate over residues 551–568; sequence PAGAPTTTQTNGQGDQQN. At Ser-625 the chain carries Phosphoserine.

In terms of assembly, found in a complex with PUF60 and far upstream element (FUSE) DNA segment. Interacts with PUF60 and JTV1. Ubiquitinated. This targets the protein for proteasome-mediated degradation.

The protein localises to the nucleus. In terms of biological role, regulates MYC expression by binding to a single-stranded far-upstream element (FUSE) upstream of the MYC promoter. May act both as activator and repressor of transcription. In Rattus norvegicus (Rat), this protein is Far upstream element-binding protein 1.